The following is a 331-amino-acid chain: Calcium-binding and coiled-coil domain-containing protein 2 (331 aa).

A CLIR motif is present at residues Ile-128 to Val-131. Residues Ile-132–Ala-309 are a coiled coil. Residues Lys-189–Pro-310 are disordered. Residues Ala-190–Glu-193 carry the LIR-like motif. Residues Lys-292–Ala-302 form an interaction with LGALS8 region.

It belongs to the CALCOCO family. Dimer. Part of a complex consisting of CALCOCO2, TAX1BP1 and MYO6. Interacts with MYO6. Interacts with GEMIN4. Interacts with ATG8 family members MAP1LC3A, MAP1LC3B, GABARAP, GABARAPL1 and GABARAPL2. Interacts with ATG8 family member MAP1LC3C. Interacts with LGALS8. Interacts with TOM1; the interaction is indirect and is mediated by MYO6, which acts as a bridge between TOM1 and CALCOCO2. Interacts with AZI2.

The protein localises to the cytoplasm. It is found in the perinuclear region. It localises to the cytoskeleton. The protein resides in the cytoplasmic vesicle. Its subcellular location is the autophagosome membrane. Its function is as follows. Xenophagy-specific receptor required for autophagy-mediated intracellular bacteria degradation. Acts as an effector protein of galectin-sensed membrane damage that restricts the proliferation of infecting pathogens upon entry into the cytosol by targeting LGALS8-associated bacteria for autophagy. Initially orchestrates bacteria targeting to autophagosomes and subsequently ensures pathogen degradation by regulating pathogen-containing autophagosome maturation. Bacteria targeting to autophagosomes relies on its interaction with MAP1LC3A, MAP1LC3B and/or GABARAPL2, whereas regulation of pathogen-containing autophagosome maturation requires the interaction with MAP3LC3C. May play a role in ruffle formation and actin cytoskeleton organization and seems to negatively regulate constitutive secretion. This Mus musculus (Mouse) protein is Calcium-binding and coiled-coil domain-containing protein 2.